The following is a 935-amino-acid chain: Transmembrane channel-like protein 1 (935 aa).

Disordered stretches follow at residues 1 to 21 and 37 to 204; these read MPRH…DEGK and ERGK…LGSL. Composition is skewed to basic and acidic residues over residues 37–47, 54–79, 109–136, 152–163, and 172–184; these read ERGKIKQASRD, RNGE…EKKH, DKSS…EKDV, NHEKTKQHLKEE, and PETT…KSES. The next 10 helical transmembrane spans lie at 303–340, 392–423, 480–510, 523–550, 555–589, 633–670, 690–710, 714–736, 751–774, and 818–851; these read SSVA…MGKP, RMPL…ANEE, LTRF…VRRS, WWER…ISTL, PRIA…QLKR, WETM…VRFL, VSGN…GAFY, LPAL…VMCC, NFYM…TIVS, and LVLP…KKKL. The span at 874–886 shows a compositional bias: basic and acidic residues; the sequence is EQARKAGEQRRNS. A disordered region spans residues 874–935; that stretch reads EQARKAGEQR…QQPQKNSKKR (62 aa). Polar residues-rich tracts occupy residues 899–919 and 926–935; these read SHVS…TSSG and QQPQKNSKKR.

The protein belongs to the TMC family. Interacts specifically with isoform CD3 of PCDH15A (via cytoplasmic domain). In terms of tissue distribution, in adults, expression is restricted to the hair cells of inner ear and lateral line organ. Expressed at higher levels in the larval lateral-line neuromasts than in the larval inner ear. Expressed in the sensory hair cell patches of the ear at 4 days post fertilization (dpf).

The protein resides in the cell membrane. The enzyme catalyses Ca(2+)(in) = Ca(2+)(out). Pore-forming subunit of the mechanotransducer (MET) non-selective cation channel complex located at the tips of hair-cell stereocilia. Highly permeable to calcium and likely transports monovalent cations. This Danio rerio (Zebrafish) protein is Transmembrane channel-like protein 1.